Consider the following 234-residue polypeptide: DNA repair protein RecO (234 aa).

Belongs to the RecO family.

Functionally, involved in DNA repair and RecF pathway recombination. This Alteromonas mediterranea (strain DSM 17117 / CIP 110805 / LMG 28347 / Deep ecotype) protein is DNA repair protein RecO.